Reading from the N-terminus, the 195-residue chain is CASP-like protein 1E2 (195 aa).

The Cytoplasmic segment spans residues 1 to 29 (MEVESKTSFGGMESKSKEVKVVTGGKLRP). Residues 30–50 (FDLVLRVVALALTLVAAVLLG) form a helical membrane-spanning segment. Topologically, residues 51–82 (VDKQTKVVSLQLLPTLPPMDVPVTAKWRYLSA) are extracellular. A helical membrane pass occupies residues 83 to 103 (FVYFVVSNAIACSYAALSLLL). Residues 104–122 (SVGNSKGNKGLGLAITVMD) are Cytoplasmic-facing. The helical transmembrane segment at 123–143 (LVMVALLFSSNGAAGAIGLMG) threads the bilayer. Residues 144-165 (YEGNSRVRWGKVCNVFGKFCNQ) lie on the Extracellular side of the membrane. A helical membrane pass occupies residues 166–186 (VAVALGLSFFGGLAFFLLVVM). Residues 187–195 (AAFALNKRH) lie on the Cytoplasmic side of the membrane.

Belongs to the Casparian strip membrane proteins (CASP) family. As to quaternary structure, homodimer and heterodimers.

It localises to the cell membrane. The chain is CASP-like protein 1E2 from Vitis vinifera (Grape).